Consider the following 432-residue polypeptide: ATP-dependent RNA helicase RhlB (432 aa).

A Q motif motif is present at residues 9–37; sequence QRFADLPLHAEVIQALNENGFEFCTPIQA. In terms of domain architecture, Helicase ATP-binding spans 40–219; the sequence is LPVLLKAKDI…YDHMNDPEKV (180 aa). Position 53-60 (53-60) interacts with ATP; that stretch reads AQTGTGKT. The DEAD box motif lies at 165-168; that stretch reads DEAD. Positions 243–390 constitute a Helicase C-terminal domain; it reads KMRLLLTLME…VSRYDREALL (148 aa). Residues 395–432 are disordered; it reads TPVKIHRKHPTSRTRDGAKGAHRSGGARPPRHRTRRPS. Basic residues predominate over residues 423-432; the sequence is PPRHRTRRPS.

Belongs to the DEAD box helicase family. RhlB subfamily. Component of the RNA degradosome, which is a multiprotein complex involved in RNA processing and mRNA degradation.

It is found in the cytoplasm. It catalyses the reaction ATP + H2O = ADP + phosphate + H(+). Functionally, DEAD-box RNA helicase involved in RNA degradation. Has RNA-dependent ATPase activity and unwinds double-stranded RNA. The chain is ATP-dependent RNA helicase RhlB from Shewanella denitrificans (strain OS217 / ATCC BAA-1090 / DSM 15013).